Consider the following 359-residue polypeptide: Probable isoaspartyl peptidase/L-asparaginase 3 (359 aa).

Threonine 224 serves as the catalytic Nucleophile. Residues 252-255 (RVGD) and 275-278 (TGDG) contribute to the substrate site.

It belongs to the Ntn-hydrolase family. As to quaternary structure, heterotetramer of two alpha and two beta chains arranged as a dimer of alpha/beta heterodimers. Post-translationally, cleaved into an alpha and beta chain by autocatalysis; this activates the enzyme. The N-terminal residue of the beta subunit is responsible for the nucleophile hydrolase activity.

It carries out the reaction Cleavage of a beta-linked Asp residue from the N-terminus of a polypeptide.. Its function is as follows. Acts in asparagine catabolism but also in the final steps of protein degradation via hydrolysis of a range of isoaspartyl dipeptides. The chain is Probable isoaspartyl peptidase/L-asparaginase 3 from Arabidopsis thaliana (Mouse-ear cress).